An 80-amino-acid chain; its full sequence is UPF0057 membrane protein ZK632.10 (80 aa).

The next 2 helical transmembrane spans lie at 4–24 and 32–52; these read ILLAILAIFLPPIAVLLDVGC and ILLTCLGIIPGIIHAWYIILC.

The protein belongs to the UPF0057 (PMP3) family.

It is found in the membrane. The polypeptide is UPF0057 membrane protein ZK632.10 (Caenorhabditis elegans).